We begin with the raw amino-acid sequence, 282 residues long: Acetyl-coenzyme A carboxylase carboxyl transferase subunit beta (282 aa).

Residues 29 to 282 (LMKRCPNCGL…LLKYGGMQDD (254 aa)) enclose the CoA carboxyltransferase N-terminal domain. 4 residues coordinate Zn(2+): Cys33, Cys36, Cys51, and Cys54. The C4-type zinc finger occupies 33 to 54 (CPNCGLEFFARRLDKYKTCPDC).

Belongs to the AccD/PCCB family. In terms of assembly, acetyl-CoA carboxylase is a heterohexamer composed of biotin carboxyl carrier protein (AccB), biotin carboxylase (AccC) and two subunits each of ACCase subunit alpha (AccA) and ACCase subunit beta (AccD). Zn(2+) is required as a cofactor.

The protein resides in the cytoplasm. The enzyme catalyses N(6)-carboxybiotinyl-L-lysyl-[protein] + acetyl-CoA = N(6)-biotinyl-L-lysyl-[protein] + malonyl-CoA. The protein operates within lipid metabolism; malonyl-CoA biosynthesis; malonyl-CoA from acetyl-CoA: step 1/1. Its function is as follows. Component of the acetyl coenzyme A carboxylase (ACC) complex. Biotin carboxylase (BC) catalyzes the carboxylation of biotin on its carrier protein (BCCP) and then the CO(2) group is transferred by the transcarboxylase to acetyl-CoA to form malonyl-CoA. This Lactobacillus delbrueckii subsp. bulgaricus (strain ATCC 11842 / DSM 20081 / BCRC 10696 / JCM 1002 / NBRC 13953 / NCIMB 11778 / NCTC 12712 / WDCM 00102 / Lb 14) protein is Acetyl-coenzyme A carboxylase carboxyl transferase subunit beta.